A 314-amino-acid chain; its full sequence is MTADYGHVTVFLRQAVENLAVKTNGIYVDATLGGGGHTDLLLKKALHGHVYSFDQDENAIDFNKKRFSKEISEGRLSLIHSNFQNLIKELNLLKVFAIDGIVFDLGVSSPQFDDEKRGFSYRSDARLDMRMDQSQSLDAYQIVNTWEYKDLASIINRYGEEKFASSIARKIIKRREVQPIITTEELVETIKEALPDKILHKKGHPAKKTFQAIRIAVNDELNVLQEALKQASQLLNSGGRISVITFQSLEDRIVKHFFNQLATKNQLPSKLPVPDKFIQEEFKLLTKHPLIPSVEEIEENHRAHSAKLRVLEKN.

S-adenosyl-L-methionine contacts are provided by residues 35-37 (GGH), Asp54, Phe83, Asp104, and Gln111.

The protein belongs to the methyltransferase superfamily. RsmH family.

The protein localises to the cytoplasm. It carries out the reaction cytidine(1402) in 16S rRNA + S-adenosyl-L-methionine = N(4)-methylcytidine(1402) in 16S rRNA + S-adenosyl-L-homocysteine + H(+). In terms of biological role, specifically methylates the N4 position of cytidine in position 1402 (C1402) of 16S rRNA. The chain is Ribosomal RNA small subunit methyltransferase H from Oenococcus oeni (strain ATCC BAA-331 / PSU-1).